Here is a 418-residue protein sequence, read N- to C-terminus: Diaminopimelate decarboxylase (418 aa).

Lys53 is modified (N6-(pyridoxal phosphate)lysine). Residues Gly223 and 264–267 (EPGR) each bind pyridoxal 5'-phosphate. Substrate contacts are provided by Arg267, Arg303, and Tyr307. Cys338 acts as the Proton donor in catalysis. Residues Glu339 and Tyr374 each coordinate substrate. Tyr374 serves as a coordination point for pyridoxal 5'-phosphate.

The protein belongs to the Orn/Lys/Arg decarboxylase class-II family. LysA subfamily. Homodimer. Pyridoxal 5'-phosphate serves as cofactor.

It carries out the reaction meso-2,6-diaminopimelate + H(+) = L-lysine + CO2. Its pathway is amino-acid biosynthesis; L-lysine biosynthesis via DAP pathway; L-lysine from DL-2,6-diaminopimelate: step 1/1. Specifically catalyzes the decarboxylation of meso-diaminopimelate (meso-DAP) to L-lysine. In Buchnera aphidicola subsp. Baizongia pistaciae (strain Bp), this protein is Diaminopimelate decarboxylase.